Consider the following 257-residue polypeptide: Acetyl-coenzyme A carboxylase carboxyl transferase subunit beta 1 (257 aa).

Residues 1 to 257 (MNINDIFLKR…KMHVNTGGEA (257 aa)) form the CoA carboxyltransferase N-terminal domain.

Belongs to the AccD/PCCB family. As to quaternary structure, acetyl-CoA carboxylase is a heterohexamer composed of biotin carboxyl carrier protein (AccB), biotin carboxylase (AccC) and two subunits each of ACCase subunit alpha (AccA) and ACCase subunit beta (AccD).

The protein resides in the cytoplasm. It carries out the reaction N(6)-carboxybiotinyl-L-lysyl-[protein] + acetyl-CoA = N(6)-biotinyl-L-lysyl-[protein] + malonyl-CoA. Its pathway is lipid metabolism; malonyl-CoA biosynthesis; malonyl-CoA from acetyl-CoA: step 1/1. Component of the acetyl coenzyme A carboxylase (ACC) complex. Biotin carboxylase (BC) catalyzes the carboxylation of biotin on its carrier protein (BCCP) and then the CO(2) group is transferred by the transcarboxylase to acetyl-CoA to form malonyl-CoA. The polypeptide is Acetyl-coenzyme A carboxylase carboxyl transferase subunit beta 1 (Lachnospira eligens (strain ATCC 27750 / DSM 3376 / VPI C15-48 / C15-B4) (Eubacterium eligens)).